The following is a 1413-amino-acid chain: Sushi, nidogen and EGF-like domain-containing protein 1 (1413 aa).

Residues 1–24 (MRHGVAWALLVAAALGLGARGVRG) form the signal peptide. The region spanning 103–258 (AFWADVDNRR…GRWAFRIDDA (156 aa)) is the NIDO domain. Asn145 and Asn204 each carry an N-linked (GlcNAc...) asparagine glycan. EGF-like domains follow at residues 268–309 (TTSV…RRCH), 311–347 (DVNE…PTCE), and 349–385 (AQSP…AACE). Cystine bridges form between Cys272–Cys284, Cys278–Cys297, Cys299–Cys308, Cys315–Cys326, Cys320–Cys335, Cys337–Cys346, Cys353–Cys364, Cys358–Cys373, Cys375–Cys384, Cys391–Cys402, Cys396–Cys411, Cys413–Cys422, Cys433–Cys444, Cys438–Cys453, Cys455–Cys464, Cys472–Cys480, Cys474–Cys488, and Cys490–Cys499. An N-linked (GlcNAc...) asparagine glycan is attached at Asn292. Residues 352–374 (PCDTKECQHGGQCQVENGSAVCV) enclose the Follistatin-like 1 domain. An N-linked (GlcNAc...) asparagine glycan is attached at Asn368. Residues 387–423 (DVDDCSPDPCLNGGSCVDLVGNYTCLCAEPFKGLRCE) form the EGF-like 4; calcium-binding domain. Asn408 is a glycosylation site (N-linked (GlcNAc...) asparagine). 2 EGF-like domains span residues 429–465 (VPDA…LDCR) and 468–500 (VPDD…LLCE). N-linked (GlcNAc...) asparagine glycosylation occurs at Asn484. The 24-residue stretch at 507–530 (PCNMNTQCPDGGYCMEHGGSYLCV) folds into the Follistatin-like 2 domain. Asn536 carries N-linked (GlcNAc...) asparagine glycosylation. EGF-like domains follow at residues 541–577 (LPSP…KHCE), 580–616 (RPHL…RHCE), 619–655 (KPDS…RHCE), and 657–693 (APSP…RRCQ). Disulfide bonds link Cys545/Cys556, Cys550/Cys565, Cys567/Cys576, Cys584/Cys595, Cys589/Cys604, Cys606/Cys615, Cys623/Cys634, Cys628/Cys643, Cys645/Cys654, Cys661/Cys672, Cys666/Cys681, Cys683/Cys692, Cys698/Cys739, Cys724/Cys751, Cys757/Cys768, Cys762/Cys777, Cys779/Cys788, Cys795/Cys806, Cys800/Cys815, Cys817/Cys826, Cys833/Cys844, Cys838/Cys853, Cys855/Cys864, Cys871/Cys882, Cys876/Cys891, and Cys893/Cys902. The Sushi domain occupies 696 to 753 (VDCGPPEEVKHATLRFNGTRLGAVALYACDRGYSLSAPSRIRVCQPHGVWSEPPQCLE). N-linked (GlcNAc...) asparagine glycosylation is present at Asn712. The region spanning 753-789 (EIDECRSQPCLHGGSCQDRVAGYLCLCSTGYEGAHCE) is the EGF-like 11; calcium-binding domain. Residues 791-827 (ERDECRAHPCRNGGSCRNLPGAYVCRCPAGFVGVHCE) enclose the EGF-like 12; calcium-binding domain. 2 EGF-like domains span residues 829-865 (EVDA…YHCE) and 867-903 (VSDP…EDCA). Residue Asn886 is glycosylated (N-linked (GlcNAc...) asparagine). Fibronectin type-III domains follow at residues 908 to 1006 (PPTA…TRPR), 1007 to 1105 (PVEG…TRPL), and 1106 to 1200 (PPAN…SPRD). N-linked (GlcNAc...) asparagine glycosylation is found at Asn977, Asn1015, Asn1109, and Asn1139. The interval 1206–1226 (WHQGGHHPRVLKNRPPPARLP) is disordered. Residues 1207–1217 (HQGGHHPRVLK) are compositionally biased toward basic residues. In terms of domain architecture, EGF-like 15 spans 1307–1343 (VPGNCSENPCQNGGTCVPGADAHSCDCGPGFKGRRCE). N-linked (GlcNAc...) asparagine glycosylation is present at Asn1310. Intrachain disulfides connect Cys1311–Cys1322, Cys1316–Cys1331, and Cys1333–Cys1342. Residues 1394–1413 (TSLKKTPNRKQSKSQTLEKS) are disordered.

Post-translationally, phosphorylated on serine and threonine residues. N-glycosylated.

The protein localises to the secreted. It is found in the extracellular space. It localises to the extracellular matrix. This is Sushi, nidogen and EGF-like domain-containing protein 1 from Homo sapiens (Human).